The sequence spans 116 residues: Ig heavy chain V region 1B43 (116 aa).

A signal peptide spans 1-18; that stretch reads MRVLILLCLFTAFPGILS. The segment at 19-48 is framework-1; the sequence is DVQLQESGPDLVKPSQSLSLTCTVTGYSIT. Cys-40 and Cys-114 form a disulfide bridge. Positions 49-53 are complementarity-determining-1; the sequence is SGYSW. A framework-2 region spans residues 54–67; it reads HWIRQFPGNKLEWM. The interval 68 to 84 is complementarity-determining-2; it reads GYIHYSGNTSYNPSLKS. A framework-3 region spans residues 85 to 116; sequence RISITRDTSKNQFFLQLNSVTTEDTATYYCAR.

The protein is Ig heavy chain V region 1B43 of Mus musculus (Mouse).